We begin with the raw amino-acid sequence, 130 residues long: Putative pre-16S rRNA nuclease (130 aa).

Belongs to the YqgF nuclease family.

The protein resides in the cytoplasm. Functionally, could be a nuclease involved in processing of the 5'-end of pre-16S rRNA. The sequence is that of Putative pre-16S rRNA nuclease from Buchnera aphidicola subsp. Cinara cedri (strain Cc).